The following is a 509-amino-acid chain: MKKPIVQLLLIFTIVSIVLFLLNTSYISLYTFVGALWSITIVGISFVIFIENRSPQSTLAWFLVLALLPIIGVLLYAIFGRSRWRRKKHLHRSEEQRKLFREILEGRRLELLLTVPLNERSIHLTEVIQKFGGGPAADRTTTKLLTNGDQTFSEILRAIEQAKHHIHIQYYIYKSDEIGTKVRDALIQKAKDGVIVRFLYDGLGSNTLRRRFLQPMKEAGIEIVEFDPIFSAWLLETVNYRNHRKIVIVDGEIGFTGGLNVGDEYLGRSKKFPVWRDSHLKIEGKALYKLQAIFLEDWLYASSGLNTYSWDQFMNRQYFPGKEISNAEGAVQIVASGPSSDDKSIRNTLLAVMGSAKKSIWIATPYFIPDQETLTLLRLSAIAGIDVRILYPGKSDSIISDQASQSYFTPLLKAGASIYSYKDGFMHAKIVLVDDTIATIGTANMDVRSFELNYEIISVLYESKTVHDIKRDFEEDFKHSTEIKWNSFQKRSIKKRILESFMRLISPLL.

Helical transmembrane passes span 4–24 (PIVQLLLIFTIVSIVLFLLNT), 30–50 (YTFVGALWSITIVGISFVIFI), and 59–79 (LAWFLVLALLPIIGVLLYAIF). PLD phosphodiesterase domains are found at residues 238–265 (VNYRNHRKIVIVDGEIGFTGGLNVGDEY) and 422–449 (KDGFMHAKIVLVDDTIATIGTANMDVRS). Active-site residues include His-243, Lys-245, Asp-250, His-427, Lys-429, and Asp-434.

It belongs to the phospholipase D family. Cardiolipin synthase subfamily.

It localises to the cell membrane. The catalysed reaction is 2 a 1,2-diacyl-sn-glycero-3-phospho-(1'-sn-glycerol) = a cardiolipin + glycerol. Catalyzes the reversible phosphatidyl group transfer from one phosphatidylglycerol molecule to another to form cardiolipin (CL) (diphosphatidylglycerol) and glycerol. This is Cardiolipin synthase 1 (cls1) from Bacillus cereus (strain ATCC 14579 / DSM 31 / CCUG 7414 / JCM 2152 / NBRC 15305 / NCIMB 9373 / NCTC 2599 / NRRL B-3711).